A 425-amino-acid chain; its full sequence is Dihydroorotase (425 aa).

2 residues coordinate Zn(2+): His58 and His60. Substrate contacts are provided by residues 60–62 (HFR) and Asn92. 3 residues coordinate Zn(2+): Asp150, His177, and His230. Asn276 is a binding site for substrate. Position 303 (Asp303) interacts with Zn(2+). Asp303 is an active-site residue. Residues His307 and 321–322 (FG) each bind substrate.

This sequence belongs to the metallo-dependent hydrolases superfamily. DHOase family. Class I DHOase subfamily. Requires Zn(2+) as cofactor.

It carries out the reaction (S)-dihydroorotate + H2O = N-carbamoyl-L-aspartate + H(+). The protein operates within pyrimidine metabolism; UMP biosynthesis via de novo pathway; (S)-dihydroorotate from bicarbonate: step 3/3. Functionally, catalyzes the reversible cyclization of carbamoyl aspartate to dihydroorotate. The protein is Dihydroorotase of Pediococcus pentosaceus (strain ATCC 25745 / CCUG 21536 / LMG 10740 / 183-1w).